Here is a 122-residue protein sequence, read N- to C-terminus: Large ribosomal subunit protein uL14 (122 aa).

It belongs to the universal ribosomal protein uL14 family. Part of the 50S ribosomal subunit. Forms a cluster with proteins L3 and L19. In the 70S ribosome, L14 and L19 interact and together make contacts with the 16S rRNA in bridges B5 and B8.

Its function is as follows. Binds to 23S rRNA. Forms part of two intersubunit bridges in the 70S ribosome. In Psychrobacter sp. (strain PRwf-1), this protein is Large ribosomal subunit protein uL14.